The sequence spans 143 residues: Hemoglobin cathodic subunit alpha (143 aa).

Position 1 is an N-acetylserine (S1). Residues 1–143 (SLAPGDKTVV…VCAALSDKYR (143 aa)) enclose the Globin domain. An O2-binding site is contributed by H59. Residue H89 participates in heme b binding.

This sequence belongs to the globin family. Heterotetramer of two alpha chains and two beta chains. As to expression, red blood cells.

Involved in oxygen transport from gills to the various peripheral tissues. The protein is Hemoglobin cathodic subunit alpha of Gymnothorax unicolor (Brown moray).